The following is a 582-amino-acid chain: Poly(A) RNA polymerase, mitochondrial (582 aa).

The transit peptide at 1–37 (MAVPGVGLLTRLNLCARRRTRVQRPIVRLLSCPGTVA) directs the protein to the mitochondrion. Lys-90 bears the N6-acetyllysine mark. ATP is bound by residues 107 to 109 (YES) and 241 to 242 (GC). Asp-243 and Asp-245 together coordinate Mg(2+). One can recognise a PAP-associated domain in the interval 437-483 (LELLLKEFFEYFGNFAFDKNSINIRQGREQNKPDSSPLYIQNPFETS).

Belongs to the DNA polymerase type-B-like family. Homodimer. Mg(2+) is required as a cofactor. Requires Mn(2+) as cofactor. Ubiquitous, with stronger expression in tissues with high energy requirements: heart, brain, and skeletal muscle.

The protein localises to the cytoplasm. It localises to the mitochondrion. It catalyses the reaction RNA(n) + ATP = RNA(n)-3'-adenine ribonucleotide + diphosphate. Its function is as follows. Polymerase that creates the 3' poly(A) tail of mitochondrial transcripts. Can use all four nucleotides, but has higher activity with ATP and UTP (in vitro). Plays a role in replication-dependent histone mRNA degradation. May be involved in the terminal uridylation of mature histone mRNAs before their degradation is initiated. Might be responsible for the creation of some UAA stop codons which are not encoded in mtDNA. The chain is Poly(A) RNA polymerase, mitochondrial (MTPAP) from Homo sapiens (Human).